Reading from the N-terminus, the 188-residue chain is Ribosome-recycling factor (188 aa).

This sequence belongs to the RRF family.

The protein localises to the cytoplasm. In terms of biological role, responsible for the release of ribosomes from messenger RNA at the termination of protein biosynthesis. May increase the efficiency of translation by recycling ribosomes from one round of translation to another. The protein is Ribosome-recycling factor of Acidiphilium cryptum (strain JF-5).